Here is a 31-residue protein sequence, read N- to C-terminus: Cytochrome b6-f complex subunit 6 (31 aa).

A helical transmembrane segment spans residues 4–26 (ITSYFGFLLAALTITPALLISLN).

Belongs to the PetL family. As to quaternary structure, the 4 large subunits of the cytochrome b6-f complex are cytochrome b6, subunit IV (17 kDa polypeptide, PetD), cytochrome f and the Rieske protein, while the 4 small subunits are PetG, PetL, PetM and PetN. The complex functions as a dimer.

Its subcellular location is the plastid. The protein localises to the chloroplast thylakoid membrane. Component of the cytochrome b6-f complex, which mediates electron transfer between photosystem II (PSII) and photosystem I (PSI), cyclic electron flow around PSI, and state transitions. PetL is important for photoautotrophic growth as well as for electron transfer efficiency and stability of the cytochrome b6-f complex. This chain is Cytochrome b6-f complex subunit 6, found in Dioscorea elephantipes (Elephant's foot yam).